A 160-amino-acid chain; its full sequence is UPF0178 protein XC_1827 (160 aa).

Belongs to the UPF0178 family.

The sequence is that of UPF0178 protein XC_1827 from Xanthomonas campestris pv. campestris (strain 8004).